The following is an 862-amino-acid chain: Protein JOKA2 (862 aa).

Residues 6–90 (SIVIKVKYEE…NPLRISARLN (85 aa)) enclose the PB1 domain. Positions 92–106 (GERSGRASARSSGNS) are enriched in low complexity. 3 disordered regions span residues 92 to 117 (GERS…VQPP), 194 to 234 (KGNT…ASNE), and 295 to 345 (VRNS…DSSG). Residues 325 to 345 (SASSSKVKQCNWDSPNADSSG) show a composition bias toward polar residues. The segment at 442 to 492 (HKGVRCDGCGVHPITGPRFISKVKENYDLCSICFAEMGNDADYIRMDRPLT) adopts a ZZ-type; degenerate zinc-finger fold. Residues cysteine 447, cysteine 450, cysteine 471, and cysteine 474 each coordinate Zn(2+). The region spanning 811–860 (SVDDLCGVAEWDPILEELKEMGFCDKEMNKKLLKKNNGSIKRVVMDLIAG) is the UBA domain. An ATG8 interacting motif (AIM) motif is present at residues 817–824 (GVAEWDPI).

Interacts (via C-terminal AIM motif) with ATG8CL.

It is found in the vacuole. The protein resides in the cytoplasmic vesicle. Its subcellular location is the autophagosome. Its function is as follows. Autophagic substrate that functions as a host autophagy cargo receptor. Requires ATG8 protein expression to be recognized as an autophagic substrate. Activates ATG8CL-mediated selective autophagy, and contributes to defense against the fungal pathogen Phytophtora infestans. In Solanum tuberosum (Potato), this protein is Protein JOKA2.